The primary structure comprises 314 residues: Olfactory receptor 5F1 (314 aa).

Topologically, residues 1-25 (MTRKNYTSLTEFVLLGLADTLELQI) are extracellular. N-linked (GlcNAc...) asparagine glycosylation occurs at N5. Residues 26-46 (ILFLFFLVIYTLTVLGNLGMI) form a helical membrane-spanning segment. Residues 47-54 (LLIRIDSQ) are Cytoplasmic-facing. Residues 55-75 (LHTPMYFFLANLSFVDVCNST) traverse the membrane as a helical segment. Residues 76–99 (TITPKMLADLLSEKKTISFAGCFL) are Extracellular-facing. A disulfide bond links C97 and C189. A helical membrane pass occupies residues 100-120 (QMYFFISLATTECILFGLMAY). The Cytoplasmic portion of the chain corresponds to 121–139 (DRYAAICRPLLYSLIMSRT). The chain crosses the membrane as a helical span at residues 140–160 (VYLKMAAGAFAAGLLNFMVNT). Over 161-196 (SHVSSLSFCDSNVIHHFFCDSPPLFKLSCSDTILKE) the chain is Extracellular. A helical transmembrane segment spans residues 197 to 217 (SISSILAGVNIVGTLLVILSS). The Cytoplasmic segment spans residues 218 to 237 (YSYVLFSIFSMHSGEGRHRA). A helical membrane pass occupies residues 238 to 258 (FSTCASHLTAIILFYATCIYT). Topologically, residues 259–271 (YLRPSSSYSLNQD) are extracellular. Residues 272–292 (KVASVFYTVVIPMLNPLIYSL) form a helical membrane-spanning segment. Over 293-314 (RSKEVKKALANVISRKRTSSFL) the chain is Cytoplasmic.

Belongs to the G-protein coupled receptor 1 family.

It localises to the cell membrane. Its function is as follows. Odorant receptor. This Homo sapiens (Human) protein is Olfactory receptor 5F1 (OR5F1).